Reading from the N-terminus, the 598-residue chain is Nuclear receptor subfamily 4 group A member 2 (598 aa).

The interval 1-22 (MPCVQAQYGSSPQGASPASQSY) is disordered. A compositionally biased stretch (low complexity) spans 8–22 (YGSSPQGASPASQSY). Residues 260-335 (EGLCAVCGDN…VGMVKEVVRT (76 aa)) constitute a DNA-binding region (nuclear receptor). NR C4-type zinc fingers lie at residues 263-283 (CAVCGDNAACQHYGVRTCEGC) and 299-318 (CLANKNCPVDKRRRNRCQYC). The short motif at 287-314 (FKRTVQKNAKYVCLANKNCPVDKRRRNR) is the Bipartite nuclear localization signal (NLS1) element. Residues 337-361 (SLKGRRGRLPSKPKSPQEPSPPSPP) are disordered. The Nuclear localization signal (NLS1) motif lies at 338-350 (LKGRRGRLPSKPK). A compositionally biased stretch (pro residues) spans 352–361 (PQEPSPPSPP). An NR LBD domain is found at 360 to 595 (PPVSLISALV…AIIDKLFLDT (236 aa)). A nuclear export sequence (NES1) motif is present at residues 443 to 452 (FLELFVLRLA). A nuclear export sequence (NES2) motif is present at residues 568-577 (QGLQRIFYLK).

Belongs to the nuclear hormone receptor family. NR4 subfamily. As to quaternary structure, interacts with SFPQ, NCOR2, SIN3A and HADC1. The interaction with NCOR2 increases in the absence of PITX3. Interacts with PER2.

Its subcellular location is the cytoplasm. The protein resides in the nucleus. Functionally, transcriptional regulator which is important for the differentiation and maintenance of meso-diencephalic dopaminergic (mdDA) neurons during development. It is crucial for expression of a set of genes such as SLC6A3, SLC18A2, TH and DRD2 which are essential for development of mdDA neurons. This chain is Nuclear receptor subfamily 4 group A member 2 (NR4A2), found in Bos taurus (Bovine).